The primary structure comprises 227 residues: Ureidoacrylate amidohydrolase RutB (227 aa).

Residue Asp-22 is the Proton acceptor of the active site. Lys-131 is a catalytic residue. The Nucleophile role is filled by Cys-164.

It belongs to the isochorismatase family. RutB subfamily.

It catalyses the reaction (Z)-3-ureidoacrylate + H2O + H(+) = (Z)-3-aminoacrylate + NH4(+) + CO2. It carries out the reaction (Z)-3-ureidoacrylate + H2O = (Z)-3-aminoacrylate + carbamate + H(+). The enzyme catalyses (Z)-2-methylureidoacrylate + H2O + H(+) = (Z)-2-methylaminoacrylate + NH4(+) + CO2. In terms of biological role, hydrolyzes ureidoacrylate to form aminoacrylate and carbamate. The carbamate hydrolyzes spontaneously, thereby releasing one of the nitrogen atoms of the pyrimidine ring as ammonia and one of its carbon atoms as CO2. The chain is Ureidoacrylate amidohydrolase RutB from Azorhizobium caulinodans (strain ATCC 43989 / DSM 5975 / JCM 20966 / LMG 6465 / NBRC 14845 / NCIMB 13405 / ORS 571).